The chain runs to 634 residues: Proline and serine-rich protein 3 (634 aa).

Disordered regions lie at residues 1 to 69 (MFPK…LIDN), 81 to 142 (FRQA…TSLA), 185 to 242 (DASS…ATLK), 368 to 455 (VPPT…FEGP), and 472 to 534 (FPDS…TAPK). The segment covering 15–24 (RTGATRSQRP) has biased composition (polar residues). Composition is skewed to low complexity over residues 40 to 56 (ESWP…STTE), 128 to 140 (VTGP…SSTS), and 185 to 202 (DASS…SPSS). Polar residues predominate over residues 203-215 (VTFNPDSNKSSNP). The span at 368–377 (VPPTSTSTTP) shows a compositional bias: low complexity. Positions 378–399 (APTPTPQVCIPGPPTSAPPPCA) are enriched in pro residues. Over residues 436–448 (VSTSSHQKTTVPD) the composition is skewed to polar residues. Basic and acidic residues predominate over residues 503 to 515 (PESRRGSKTESRK). Phosphoserine is present on Ser-588.

The protein resides in the cytoplasm. It localises to the cytoskeleton. The protein localises to the microtubule organizing center. It is found in the centrosome. The protein is Proline and serine-rich protein 3 (Proser3) of Mus musculus (Mouse).